The sequence spans 450 residues: tRNA-2-methylthio-N(6)-dimethylallyladenosine synthase (450 aa).

One can recognise an MTTase N-terminal domain in the interval 3-118 (KKVFIKTFGC…LPELLQQRER (116 aa)). [4Fe-4S] cluster is bound by residues Cys12, Cys49, Cys81, Cys155, Cys159, and Cys162. The region spanning 141–376 (SVQGASAFVS…VIDTHIRSIS (236 aa)) is the Radical SAM core domain. In terms of domain architecture, TRAM spans 377–440 (ASRVGTVQRI…AYTLRGQYCA (64 aa)).

It belongs to the methylthiotransferase family. MiaB subfamily. As to quaternary structure, monomer. [4Fe-4S] cluster is required as a cofactor.

Its subcellular location is the cytoplasm. It carries out the reaction N(6)-dimethylallyladenosine(37) in tRNA + (sulfur carrier)-SH + AH2 + 2 S-adenosyl-L-methionine = 2-methylsulfanyl-N(6)-dimethylallyladenosine(37) in tRNA + (sulfur carrier)-H + 5'-deoxyadenosine + L-methionine + A + S-adenosyl-L-homocysteine + 2 H(+). Catalyzes the methylthiolation of N6-(dimethylallyl)adenosine (i(6)A), leading to the formation of 2-methylthio-N6-(dimethylallyl)adenosine (ms(2)i(6)A) at position 37 in tRNAs that read codons beginning with uridine. The sequence is that of tRNA-2-methylthio-N(6)-dimethylallyladenosine synthase from Verminephrobacter eiseniae (strain EF01-2).